The chain runs to 396 residues: Coiled-coil domain-containing protein 1 (396 aa).

The first 21 residues, 1 to 21 (MAARSALCFLAIITLFVYACG), serve as a signal peptide directing secretion. Coiled-coil stretches lie at residues 53–73 (KIDS…NDRD), 109–129 (EVEK…DIID), 208–242 (DKES…ILDT), and 287–308 (YEEI…IDEH). Residues 231 to 256 (DANDDVNDILDTDDEDEDEDVQEEKD) are compositionally biased toward acidic residues. Disordered regions lie at residues 231 to 260 (DAND…EDIH) and 288 to 378 (EEIE…VADD).

In terms of tissue distribution, component of the acid-insoluble and acid-soluble organic matrix of calcified layers of the shell (at protein level).

It is found in the secreted. The protein is Coiled-coil domain-containing protein 1 of Lottia gigantea (Giant owl limpet).